The sequence spans 492 residues: 6-phosphogluconate dehydrogenase, decarboxylating 2 (492 aa).

Residues 12–17 (GLAVMG), 35–37 (NRT), 77–79 (IKA), and Asn-105 each bind NADP(+). Residues Asn-105 and 131–133 (SGG) contribute to the substrate site. Lys-185 acts as the Proton acceptor in catalysis. Residue 188–189 (HN) coordinates substrate. The active-site Proton donor is the Glu-192. Residues Tyr-193, Lys-262, Arg-289, Arg-449, and His-455 each contribute to the substrate site.

It belongs to the 6-phosphogluconate dehydrogenase family. In terms of assembly, homodimer.

The enzyme catalyses 6-phospho-D-gluconate + NADP(+) = D-ribulose 5-phosphate + CO2 + NADPH. It functions in the pathway carbohydrate degradation; pentose phosphate pathway; D-ribulose 5-phosphate from D-glucose 6-phosphate (oxidative stage): step 3/3. In terms of biological role, catalyzes the oxidative decarboxylation of 6-phosphogluconate to ribulose 5-phosphate and CO(2), with concomitant reduction of NADP to NADPH. This Saccharomyces cerevisiae (strain ATCC 204508 / S288c) (Baker's yeast) protein is 6-phosphogluconate dehydrogenase, decarboxylating 2 (GND2).